Consider the following 187-residue polypeptide: Holliday junction branch migration complex subunit RuvA (187 aa).

Residues methionine 1–lysine 64 form a domain I region. The segment at threonine 65–isoleucine 136 is domain II. A flexible linker region spans residues isoleucine 136–glutamate 139. Residues glycine 140–lysine 187 form a domain III region.

The protein belongs to the RuvA family. In terms of assembly, homotetramer. Forms an RuvA(8)-RuvB(12)-Holliday junction (HJ) complex. HJ DNA is sandwiched between 2 RuvA tetramers; dsDNA enters through RuvA and exits via RuvB. An RuvB hexamer assembles on each DNA strand where it exits the tetramer. Each RuvB hexamer is contacted by two RuvA subunits (via domain III) on 2 adjacent RuvB subunits; this complex drives branch migration. In the full resolvosome a probable DNA-RuvA(4)-RuvB(12)-RuvC(2) complex forms which resolves the HJ.

The protein resides in the cytoplasm. Functionally, the RuvA-RuvB-RuvC complex processes Holliday junction (HJ) DNA during genetic recombination and DNA repair, while the RuvA-RuvB complex plays an important role in the rescue of blocked DNA replication forks via replication fork reversal (RFR). RuvA specifically binds to HJ cruciform DNA, conferring on it an open structure. The RuvB hexamer acts as an ATP-dependent pump, pulling dsDNA into and through the RuvAB complex. HJ branch migration allows RuvC to scan DNA until it finds its consensus sequence, where it cleaves and resolves the cruciform DNA. The sequence is that of Holliday junction branch migration complex subunit RuvA from Thermoanaerobacter pseudethanolicus (strain ATCC 33223 / 39E) (Clostridium thermohydrosulfuricum).